The primary structure comprises 57 residues: Potassium channel toxin alpha-KTx 4.2 (57 aa).

A signal peptide spans 1–20 (MKVLYGILIIFILCSMFYLS). The propeptide at 21-22 (QE) is removed by a carboxypeptidase. 3 disulfides stabilise this stretch: Cys-29–Cys-50, Cys-35–Cys-55, and Cys-39–Cys-57.

This sequence belongs to the short scorpion toxin superfamily. Potassium channel inhibitor family. Alpha-KTx 04 subfamily. As to expression, expressed by the venom gland.

It localises to the secreted. Blocker for small-conductance calcium-activated potassium channels KCa2.2/KCNN2 (Kd=80 nM) and KCa2.3/KCNN3 (Kd=197 nM) and ERG1/Kv11.1/KCNH2 potassium channels (53% inhibition at 5 uM). Has also been shown to inhibit Kv1.1/KCNA1 and Nav1.7/SCN9A with a moderate potency, as well as Kv11.1/KCNH2/ERG1 and Kv1.2/KCNA2 with a low potency. The sequence is that of Potassium channel toxin alpha-KTx 4.2 from Tityus serrulatus (Brazilian scorpion).